Consider the following 613-residue polypeptide: Dihydroxy-acid dehydratase 3 (613 aa).

D81 serves as a coordination point for Mg(2+). [2Fe-2S] cluster is bound at residue C122. D123 and K124 together coordinate Mg(2+). K124 is subject to N6-carboxylysine. C197 provides a ligand contact to [2Fe-2S] cluster. E493 serves as a coordination point for Mg(2+). S519 functions as the Proton acceptor in the catalytic mechanism.

It belongs to the IlvD/Edd family. As to quaternary structure, homodimer. The cofactor is [2Fe-2S] cluster. Mg(2+) is required as a cofactor.

The enzyme catalyses (2R)-2,3-dihydroxy-3-methylbutanoate = 3-methyl-2-oxobutanoate + H2O. It carries out the reaction (2R,3R)-2,3-dihydroxy-3-methylpentanoate = (S)-3-methyl-2-oxopentanoate + H2O. It participates in amino-acid biosynthesis; L-isoleucine biosynthesis; L-isoleucine from 2-oxobutanoate: step 3/4. Its pathway is amino-acid biosynthesis; L-valine biosynthesis; L-valine from pyruvate: step 3/4. Its function is as follows. Functions in the biosynthesis of branched-chain amino acids. Catalyzes the dehydration of (2R,3R)-2,3-dihydroxy-3-methylpentanoate (2,3-dihydroxy-3-methylvalerate) into 2-oxo-3-methylpentanoate (2-oxo-3-methylvalerate) and of (2R)-2,3-dihydroxy-3-methylbutanoate (2,3-dihydroxyisovalerate) into 2-oxo-3-methylbutanoate (2-oxoisovalerate), the penultimate precursor to L-isoleucine and L-valine, respectively. This Nocardia farcinica (strain IFM 10152) protein is Dihydroxy-acid dehydratase 3.